A 934-amino-acid polypeptide reads, in one-letter code: MAKIIWTIGRFGLLLIPLIVIISRLQVEWYWFDQFELGSVYGKRLLLQLGGALFAFLFVGSCALWRQSWLRPSESEKNERSPVLTGYRYGFCLLACLLVLLSVLAIDTRLAWLAWIEPFSLSYWWSLPFSTGWPLLSLSILMLTLIMFGLTRSRRLGLTQVYGSVCICLIVARSWGLWSLAFSIPNLGRVEPMLGSDVSFGLGRFSAIAFGLELVLLQLSLTLSTALWSRLTRSTCLSDWAFPGLTARQRHGLRPGFALVLMSFSGLMWLSRHQLLWTQDGIVAGAGWLDVHLLLPLRSLGSIALLVLAFVVLPSPFSSVRRRQLRLILAFIAIASFGLEMVLFPLMHWLVVRPRELQLERPYISRAIEATRHAYQLDAIETEPFDPSSRLSREDLRDGASTLRNIRLWDSQPLLATNRQLQQLRVYYRFTNAAVDRYQLRPELLERQQVILAARELDQAALPKRSRTWQNRHFVFTHGFGFTMSPVNSRGADGLPDYFISDIGSSERINGNKALDISRADVKKNVPIGRPALYFGMLPSPYAVAPTQIEEFDHPEGDVNTYNHYSGRAGIPLASFGQRIAASIYIRDPRLLNTGVLKPDSRLLLRRDVKKRVKALAPFLQLKGDPYLVSVPMESGLDQYHDDQHQYWIVDGFTSSNTYPYASTLPDGKEMRYLRNSVKAIVDAYNGTVHLYVSEPDDPMIRGWQKVFPELFQPLESMPTSLRQHLMVPSSMFELQVQQLLRYHVTDPRIFYSGDDVWQVPKELYGKTQIPVAPYHITAQLKRSLDSEFLLLQPLTPLARPNLSGWLAARSDADHYGELVLLRFPSDVPIFGPEQIQALINQNPEISQQFGLWDRAGSQVVQGNLLVVPLGNALLYVEPIYLRARRGGLPTLTRVVVSDGSRVAMANDLNTGLEALLQGSGSKDVVVQELDQSS.

The next 9 membrane-spanning stretches (helical) occupy residues 2–22, 45–65, 86–106, 129–149, 165–185, 208–228, 251–271, 300–320, and 327–347; these read AKIIWTIGRFGLLLIPLIVII, LLLQLGGALFAFLFVGSCALW, GYRYGFCLLACLLVLLSVLAI, FSTGWPLLSLSILMLTLIMFG, VCICLIVARSWGLWSLAFSIP, IAFGLELVLLQLSLTLSTALW, HGLRPGFALVLMSFSGLMWLS, LGSIALLVLAFVVLPSPFSSV, and LILAFIAIASFGLEMVLFPLM.

The protein belongs to the UPF0182 family.

The protein localises to the cell membrane. The polypeptide is UPF0182 protein sync_1321 (Synechococcus sp. (strain CC9311)).